The following is a 440-amino-acid chain: UDP-glycosyltransferase 87A1 (440 aa).

UDP-alpha-D-glucose is bound by residues serine 263, 312–314 (CDQ), 329–337 (HCGYNSTLE), and 351–354 (FWDQ).

The protein belongs to the UDP-glycosyltransferase family.

The chain is UDP-glycosyltransferase 87A1 (UGT87A1) from Arabidopsis thaliana (Mouse-ear cress).